Reading from the N-terminus, the 492-residue chain is 3-ketoacyl-CoA synthase 5 (492 aa).

Transmembrane regions (helical) follow at residues 20–40 (LINN…AIEL) and 59–79 (LLHI…YFMS). The FAE domain maps to 76–365 (YFMSKPRTVY…FLSSLIGRKI (290 aa)). Active-site residues include cysteine 220, histidine 299, histidine 383, histidine 387, histidine 416, and asparagine 420.

It belongs to the thiolase-like superfamily. Chalcone/stilbene synthases family. Expressed in siliques, flowers, leaves and seedlings.

It is found in the membrane. The catalysed reaction is a very-long-chain acyl-CoA + malonyl-CoA + H(+) = a very-long-chain 3-oxoacyl-CoA + CO2 + CoA. The protein operates within lipid metabolism; fatty acid biosynthesis. Inhibited by K3 herbicides such as alachlor, allidochlor, anilofos, cafenstrole and flufenacet. Strongly inhibited by metazachlor and mefluidide. Mediates mostly the synthesis of VLCFAs from 26 to 30 carbons in length (e.g. C20:1, C26, C28, C30). The sequence is that of 3-ketoacyl-CoA synthase 5 from Arabidopsis thaliana (Mouse-ear cress).